The following is a 565-amino-acid chain: Salicyl-AMP ligase / salicyl-S-ArCP synthetase (565 aa).

Gly214, Gly330, Val352, Asp436, Arg451, and Lys542 together coordinate ATP.

This sequence belongs to the ATP-dependent AMP-binding enzyme family.

The enzyme catalyses salicylate + ATP + H(+) = 2-hydroxybenzoyl-5'-AMP + diphosphate. It carries out the reaction 2-hydroxybenzoyl-5'-AMP + holo-[ACP] = salicyl-[ACP] + AMP + H(+). Its pathway is siderophore biosynthesis; mycobactin biosynthesis. With respect to regulation, inhibited by salicyl-AMS, an acyl-AMP analog. Also inhibited by 5'-O-[(N-acyl)sulfamoyl]adenosines. Functionally, involved in the initial steps of the mycobactin biosynthetic pathway. Catalyzes the salicylation of the aryl carrier protein (ArCP) domain of MbtB through a two-step reaction. The first step is the ATP-dependent adenylation of salicylate to generate a salicyl-AMP intermediate. The second step is the transfer of this activated salicylate to MbtB to form a salicyl-ArCP domain thioester. This Mycobacterium tuberculosis (strain ATCC 25618 / H37Rv) protein is Salicyl-AMP ligase / salicyl-S-ArCP synthetase.